The chain runs to 252 residues: MKTVTVKDLVIGTGAPKIIVSLMAKDIARVKSEALAYREADFDILEWRVDHYADLSNVESVMAAAKILRETMPEKPLLFTFRSAKEGGEQAISTEAYIALNRAAIDSGLVDMIDLELFTGDDQVKETVAYAHAHDVKVVMSNHDFHKTPEAEEIIARLRKMQSFDADIPKIALMPQSTSDVLTLLTATLEMQEQYADRPIITMSMAKTGVISRLAGEVFGSAATFGAVKKASAPGQISVNDLRTVLTILHQA.

Residues serine 21, 46–48, and arginine 82 contribute to the 3-dehydroquinate site; that span reads EWR. Histidine 143 (proton donor/acceptor) is an active-site residue. Lysine 170 functions as the Schiff-base intermediate with substrate in the catalytic mechanism. 3 residues coordinate 3-dehydroquinate: arginine 213, serine 232, and glutamine 236.

Belongs to the type-I 3-dehydroquinase family. Homodimer.

The enzyme catalyses 3-dehydroquinate = 3-dehydroshikimate + H2O. It functions in the pathway metabolic intermediate biosynthesis; chorismate biosynthesis; chorismate from D-erythrose 4-phosphate and phosphoenolpyruvate: step 3/7. Functionally, involved in the third step of the chorismate pathway, which leads to the biosynthesis of aromatic amino acids. Catalyzes the cis-dehydration of 3-dehydroquinate (DHQ) and introduces the first double bond of the aromatic ring to yield 3-dehydroshikimate. This is 3-dehydroquinate dehydratase from Escherichia coli O139:H28 (strain E24377A / ETEC).